Reading from the N-terminus, the 645-residue chain is 1,4-alpha-glucan branching enzyme GlgB (645 aa).

D309 acts as the Nucleophile in catalysis. E352 (proton donor) is an active-site residue. Positions 619–645 are disordered; it reads VKTRKGSKKQDGSKTKVRSNVTSRGKR. The span at 636-645 shows a compositional bias: polar residues; sequence RSNVTSRGKR.

The protein belongs to the glycosyl hydrolase 13 family. GlgB subfamily. As to quaternary structure, monomer.

It catalyses the reaction Transfers a segment of a (1-&gt;4)-alpha-D-glucan chain to a primary hydroxy group in a similar glucan chain.. It participates in glycan biosynthesis; glycogen biosynthesis. Its function is as follows. Catalyzes the formation of the alpha-1,6-glucosidic linkages in glycogen by scission of a 1,4-alpha-linked oligosaccharide from growing alpha-1,4-glucan chains and the subsequent attachment of the oligosaccharide to the alpha-1,6 position. The polypeptide is 1,4-alpha-glucan branching enzyme GlgB (Bacillus cereus (strain G9842)).